A 518-amino-acid polypeptide reads, in one-letter code: Arrestin-related trafficking adapter 10 (518 aa).

A Glycyl lysine isopeptide (Lys-Gly) (interchain with G-Cter in ubiquitin) cross-link involves residue Lys118.

Belongs to the ART10 family. In terms of assembly, interacts with RSP5. Ubiquitinated by RSP5.

It is found in the cytoplasm. May regulate endocytosis by recruiting RSP5 ubiquitin ligase activity to specific plasma membrane proteins in response to extracellular stimuli. The chain is Arrestin-related trafficking adapter 10 (ART10) from Saccharomyces cerevisiae (strain YJM789) (Baker's yeast).